Reading from the N-terminus, the 644-residue chain is Protein cueball (644 aa).

The signal sequence occupies residues 1 to 26 (MIRIRFGMDVLLVVLLATCLLTPAHG). Residues 27–531 (TPLEWDFAVT…VCLTPRVWTS (505 aa)) are Extracellular-facing. N-linked (GlcNAc...) asparagine glycosylation is found at Asn82 and Asn108. LDL-receptor class B repeat units follow at residues 121–166 (MNLF…DVCR), 167–211 (RKLY…DQLS), and 212–257 (DRLF…TNDA). Asn175 and Asn190 each carry an N-linked (GlcNAc...) asparagine glycan. A glycan (N-linked (GlcNAc...) asparagine) is linked at Asn313. EGF-like domains lie at 398–430 (EIRE…FTGE) and 433–471 (ELSV…ARCE). 5 disulfide bridges follow: Cys402-Cys411, Cys406-Cys421, Cys437-Cys447, Cys441-Cys459, and Cys461-Cys470. Residues Asn473 and Asn508 are each glycosylated (N-linked (GlcNAc...) asparagine). The chain crosses the membrane as a helical span at residues 532-552 (SVIIILVVGIVSSLLLVAVIV). The Cytoplasmic portion of the chain corresponds to 553–644 (HGIRRLYKPK…LIHNMEDDLY (92 aa)).

The protein belongs to the cueball family.

Its subcellular location is the cell membrane. Functionally, has a role in spermatogenesis and oogenesis. The polypeptide is Protein cueball (Drosophila simulans (Fruit fly)).